A 358-amino-acid polypeptide reads, in one-letter code: COP9 signalosome complex subunit 5b (358 aa).

Methionine 1 carries the N-acetylmethionine modification. One can recognise an MPN domain in the interval 59–196 (VKISALALLK…IGAFRTYSKG (138 aa)). Zn(2+) contacts are provided by histidine 142, histidine 144, and aspartate 155. A JAMM motif motif is present at residues 142-155 (HSHPGYGCWLSGID). The segment covering 338–349 (MRQSNNKSPTDS) has biased composition (polar residues). The segment at 338-358 (MRQSNNKSPTDSSDPDPMITY) is disordered.

This sequence belongs to the peptidase M67A family. CSN5 subfamily. As to quaternary structure, component of the CSN complex, probably composed of CSN1, CSN2, CSN3, CSN4, CSN5 (CSN5A or CSN5B), CSN6 (CSN6A or CSN6B), CSN7 and CSN8. CSN5A or CSN5B are present within distinct CSN complexes each containing only one copy of CSN5. Interacts with itself. In the complex, it is located in the center and probably interacts directly with CSN4 and CSN6A or CSN6B. Also exists as monomeric form. Interacts with CYT1 in vitro and in planta. Interacts with FLZ3. A divalent metal cation is required as a cofactor. Ubiquitously expressed. Highly expressed in flowers and roots. Expressed at lower level in seedlings and siliques.

It localises to the cytoplasm. Its subcellular location is the nucleus. In terms of biological role, probable protease subunit of the COP9 signalosome complex (CSN), a complex involved in various cellular and developmental processes such as photomorphogenesis and auxin and jasmonate responses. The CSN complex is an essential regulator of the ubiquitin (Ubl) conjugation pathway by mediating the deneddylation of the cullin subunits of the SCF-type E3 ligase complexes, leading to decrease the Ubl ligase activity of SCF. In the complex, it probably acts as the catalytic center that mediates the cleavage of Nedd8 from cullins. It however has no metalloprotease activity by itself and requires the other subunits of the CSN complex. The CSN complex is involved in repression of photomorphogenesis in darkness by regulating the activity of COP1-containing Ubl ligase complexes. The complex is also required for degradation of PSIAA6 by regulating the activity of the Ubl ligase SCF-TIR complex. Not involved in CSN's deneddylation/derubylation activity. Essential for the structural integrity of the CSN holocomplex. This Arabidopsis thaliana (Mouse-ear cress) protein is COP9 signalosome complex subunit 5b.